The following is a 306-amino-acid chain: MVKGTWTHRTVLLNEAITALQVNPDGHYIDATFGRGGHSRLLLSQLSALGRVTAFDKDLDAIAEAQSIDDPRFSIRHQGFMHLDQMPQASVAGVLMDLGVSSPQIDNPERGFSFRNEGPLDMRMDTTRGQSVAEWLQDASIEAMTEVIRDYGEERFAGLVARAIDRRRQEHGPLQTTAELADVVASAVKTREPGKDPATRTFQALRIFINAELEELQQALQASLKVLQPGGRLVVISFHSLEDRIVKQFIAAHSREVYDRRAPFAAPKVMQLKALGRTKASEEEVAGNPRSRSAVMRVAERTGEAA.

S-adenosyl-L-methionine-binding positions include 36-38 (GGH), Asp-56, Phe-80, Asp-97, and Gln-104. The segment at 280–306 (ASEEEVAGNPRSRSAVMRVAERTGEAA) is disordered.

It belongs to the methyltransferase superfamily. RsmH family.

The protein localises to the cytoplasm. It catalyses the reaction cytidine(1402) in 16S rRNA + S-adenosyl-L-methionine = N(4)-methylcytidine(1402) in 16S rRNA + S-adenosyl-L-homocysteine + H(+). Functionally, specifically methylates the N4 position of cytidine in position 1402 (C1402) of 16S rRNA. In Polaromonas naphthalenivorans (strain CJ2), this protein is Ribosomal RNA small subunit methyltransferase H.